The chain runs to 366 residues: Beta sliding clamp (366 aa).

Belongs to the beta sliding clamp family. In terms of assembly, forms a ring-shaped head-to-tail homodimer around DNA which binds and tethers DNA polymerases and other proteins to the DNA. The DNA replisome complex has a single clamp-loading complex (3 tau and 1 each of delta, delta', psi and chi subunits) which binds 3 Pol III cores (1 core on the leading strand and 2 on the lagging strand) each with a beta sliding clamp dimer. Additional proteins in the replisome are other copies of gamma, psi and chi, Ssb, DNA helicase and RNA primase.

Its subcellular location is the cytoplasm. In terms of biological role, confers DNA tethering and processivity to DNA polymerases and other proteins. Acts as a clamp, forming a ring around DNA (a reaction catalyzed by the clamp-loading complex) which diffuses in an ATP-independent manner freely and bidirectionally along dsDNA. Initially characterized for its ability to contact the catalytic subunit of DNA polymerase III (Pol III), a complex, multichain enzyme responsible for most of the replicative synthesis in bacteria; Pol III exhibits 3'-5' exonuclease proofreading activity. The beta chain is required for initiation of replication as well as for processivity of DNA replication. In Chlamydia pneumoniae (Chlamydophila pneumoniae), this protein is Beta sliding clamp (dnaN).